Consider the following 157-residue polypeptide: Transcriptional repressor NrdR (157 aa).

Residues 3–34 (CPFCNTVDTKVIDSRLVSEGSQIKRRRQCAIC) fold into a zinc finger. Positions 49–139 (PRVIKNDDLL…VYRSFEDVRE (91 aa)) constitute an ATP-cone domain.

It belongs to the NrdR family. Zn(2+) serves as cofactor.

In terms of biological role, negatively regulates transcription of bacterial ribonucleotide reductase nrd genes and operons by binding to NrdR-boxes. This Hamiltonella defensa subsp. Acyrthosiphon pisum (strain 5AT) protein is Transcriptional repressor NrdR.